The chain runs to 956 residues: Glutamate receptor ionotropic, kainate 4 (956 aa).

The N-terminal stretch at 1–20 (MPRVSAPLVLLPAWLLMVAC) is a signal peptide. Residues 21 to 545 (SPHSLRIAAI…YFSSLDPFSP (525 aa)) lie on the Extracellular side of the membrane. N-linked (GlcNAc...) asparagine glycosylation is found at Asn158, Asn220, Asn272, Asn286, Asn323, Asn408, Asn415, and Asn479. The L-glutamate site is built by Gly500, Thr502, and Arg507. A helical membrane pass occupies residues 546–566 (GVWLFMLLAYLAVSCVLFLVA). Residues 567–623 (RLTPYEWYSPHPCAQGRCNLLVNQYSLGNSLWFPVGGFMQQGSTIAPRALSTRCVSG) lie on the Cytoplasmic side of the membrane. Residues 624-644 (VWWAFTLIIISSYTANLAAFL) form a helical membrane-spanning segment. At 645–804 (TVQRMEVPIE…HRAKGLGMEN (160 aa)) the chain is on the extracellular side. The L-glutamate site is built by Ser674, Ser675, and Glu723. N-linked (GlcNAc...) asparagine glycosylation occurs at Asn736. Residues 805–825 (IGGIFVVLICGLIVAIFMAML) traverse the membrane as a helical segment. At 826–956 (EFLWTLRHSE…DKTTNSSEPE (131 aa)) the chain is on the cytoplasmic side. The interval 931 to 956 (LRARPSPARSEESLEWDKTTNSSEPE) is disordered. A compositionally biased stretch (basic and acidic residues) spans 939–948 (RSEESLEWDK).

Belongs to the glutamate-gated ion channel (TC 1.A.10.1) family. GRIK4 subfamily. Homodimer. Can form functional heteromeric receptors with GRIK1, GRIK2 and GRIK3. In terms of tissue distribution, strong expression in hippocampal CA3 pyramidal cells. Low expression in hippocampal dentate granule cells, in layers II, V and VI of the cortex, and in cerebellar Purkinje cells. No expression in the striatum, reticular thalamus, hypothalamus or amygdaloid complex.

It localises to the cell membrane. The protein resides in the postsynaptic cell membrane. Its subcellular location is the presynaptic cell membrane. In terms of biological role, ionotropic glutamate receptor that functions as a cation-permeable ligand-gated ion channel, gated by L-glutamate and the glutamatergic agonist kainic acid. Cannot form functional channels on its own and shows channel activity only in heteromeric assembly with GRIK1, GRIK2 and GRIK3 subunits. The polypeptide is Glutamate receptor ionotropic, kainate 4 (Grik4) (Rattus norvegicus (Rat)).